Reading from the N-terminus, the 365-residue chain is Outer membrane lipoprotein A (365 aa).

A signal peptide spans 1–19 (MNIATKLMASLVASVVLTA). The segment at 19 to 121 (ACSGGGSSGS…KGEELSKDKS (103 aa)) is disordered. Cys20 is lipidated: N-palmitoyl cysteine. The S-diacylglycerol cysteine moiety is linked to residue Cys20. 2 stretches are compositionally biased toward basic and acidic residues: residues 48 to 68 (EQPK…EPKE) and 105 to 121 (NPQK…KDKS).

It localises to the cell outer membrane. In Actinobacillus pleuropneumoniae (Haemophilus pleuropneumoniae), this protein is Outer membrane lipoprotein A (omlA).